A 266-amino-acid chain; its full sequence is F-box/kelch-repeat protein At4g39560 (266 aa).

In terms of domain architecture, F-box spans 24–70 (STQILSLPVDLLISILARVSRLDYPILSLVSKSFRSLIASPELYETR). Kelch repeat units follow at residues 130–176 (DIYN…VIDG), 178–223 (IYVA…KSAV), and 226–266 (EAIC…LLVA).

The polypeptide is F-box/kelch-repeat protein At4g39560 (Arabidopsis thaliana (Mouse-ear cress)).